An 80-amino-acid polypeptide reads, in one-letter code: Beta-toxin KAaH1 (80 aa).

The signal sequence occupies residues 1–22 (MMKLMLFSIIVILFSLIGSIHG). The LCN-type CS-alpha/beta domain occupies 25–80 (VPGNYPLDSSDDTYLCAPLGENPFCIKICRKHGVKYGYCYAFQCWCEYLEDKNVKI). 3 disulfides stabilise this stretch: Cys40/Cys63, Cys49/Cys68, and Cys53/Cys70.

It belongs to the long (3 C-C) scorpion toxin superfamily. Sodium/Potassium channel inhibitor family. In terms of tissue distribution, expressed by the venom gland.

The protein resides in the secreted. Functionally, inhibits the vertebrate potassium channels Kv1.1/KCNA1 and Kv1.3/KCNA3 in vitro with an IC(50) of 5.3 nM and 50.0 nM respectively. This is Beta-toxin KAaH1 from Androctonus australis (Sahara scorpion).